Consider the following 122-residue polypeptide: Large ribosomal subunit protein uL14 (122 aa).

It belongs to the universal ribosomal protein uL14 family. In terms of assembly, part of the 50S ribosomal subunit. Forms a cluster with proteins L3 and L19. In the 70S ribosome, L14 and L19 interact and together make contacts with the 16S rRNA in bridges B5 and B8.

Functionally, binds to 23S rRNA. Forms part of two intersubunit bridges in the 70S ribosome. The sequence is that of Large ribosomal subunit protein uL14 from Aliarcobacter butzleri (strain RM4018) (Arcobacter butzleri).